The chain runs to 638 residues: XK-related protein 6 (638 aa).

Disordered stretches follow at residues 24–43 (VGSGEEDGEPGGGGCGGGDG) and 82–117 (RSAAAADGGDQPLQPPGAAGRHPPTPSAGRPQPASP). Gly residues predominate over residues 33–43 (PGGGGCGGGDG). The next 7 membrane-spanning stretches (helical) occupy residues 127 to 147 (LWIVLALLVFFGDVGTDLWLA), 158 to 178 (CFGLTLFFVLVPSLLVQSLSF), 315 to 335 (TLPCVSSVTSLMSLAWVLASY), 369 to 389 (VISFALFASIFQLYFGIFVVV), 410 to 430 (WEEILFNMVVGIVYIFCWFNV), 439 to 459 (MFAYYTIVLTENAALTFLWYF), and 470 to 490 (AVPALCCVFVSFVAGITLMLL).

The protein belongs to the XK family.

The protein localises to the cell membrane. This Mus musculus (Mouse) protein is XK-related protein 6.